The chain runs to 434 residues: Adenylosuccinate synthetase (434 aa).

Residues 25 to 31 and 53 to 55 contribute to the GTP site; these read GDEGKGK and GHT. Asp26 acts as the Proton acceptor in catalysis. 2 residues coordinate Mg(2+): Asp26 and Gly53. Residues 26–29, 51–54, Thr142, Arg156, Asn233, Thr248, and Arg312 contribute to the IMP site; these read DEGK and NAGH. His54 acts as the Proton donor in catalysis. 308–314 contacts substrate; that stretch reads VTTGRKR. GTP-binding positions include Arg314, 340-342, and 422-424; these read KLD and GVG.

Belongs to the adenylosuccinate synthetase family. As to quaternary structure, homodimer. The cofactor is Mg(2+).

The protein resides in the cytoplasm. The enzyme catalyses IMP + L-aspartate + GTP = N(6)-(1,2-dicarboxyethyl)-AMP + GDP + phosphate + 2 H(+). It participates in purine metabolism; AMP biosynthesis via de novo pathway; AMP from IMP: step 1/2. Functionally, plays an important role in the de novo pathway and in the salvage pathway of purine nucleotide biosynthesis. Catalyzes the first committed step in the biosynthesis of AMP from IMP. This chain is Adenylosuccinate synthetase, found in Schizosaccharomyces japonicus (strain yFS275 / FY16936) (Fission yeast).